The sequence spans 848 residues: DNA mismatch repair protein MutS (848 aa).

610–617 is an ATP binding site; the sequence is GPNMGGKS.

Belongs to the DNA mismatch repair MutS family.

Functionally, this protein is involved in the repair of mismatches in DNA. It is possible that it carries out the mismatch recognition step. This protein has a weak ATPase activity. The chain is DNA mismatch repair protein MutS from Francisella philomiragia subsp. philomiragia (strain ATCC 25017 / CCUG 19701 / FSC 153 / O#319-036).